The primary structure comprises 502 residues: NAD(P)H-quinone oxidoreductase chain 4, chloroplastic (502 aa).

Helical transmembrane passes span 4–24 (FPWLTILVVLPIFAGSLIFFL), 37–57 (ISICLLEFLLMTYAFCYHFQL), 87–107 (LGSILLTGFITTLATLAAWPV), 113–130 (LFYFLMLAMYSGQIGLFS), 134–154 (LLLFFIMWELELIPVYLLLSM), 167–187 (FILYTAGGSIFFLIGVLGMGL), 213–233 (ILLYFGFLIAYAVKLPIIPLH), 244–264 (HYSTCMLLAGILLKMGAYGLI), 274–294 (AHYLFSPWLVIIGAIQIIYAA), 315–335 (MGFIIIGIGSITNIGLNGAIL), 336–356 (QILSHGFIGATLFFLAGTASD), 388–408 (LALPGMSGFVAELVVFFGLIT), 419–439 (LITFVMAIGMILTPIYLLSML), and 464–484 (LFILICIFLPVIGIGIYPDFV).

This sequence belongs to the complex I subunit 4 family.

It localises to the plastid. It is found in the chloroplast thylakoid membrane. It catalyses the reaction a plastoquinone + NADH + (n+1) H(+)(in) = a plastoquinol + NAD(+) + n H(+)(out). The enzyme catalyses a plastoquinone + NADPH + (n+1) H(+)(in) = a plastoquinol + NADP(+) + n H(+)(out). This chain is NAD(P)H-quinone oxidoreductase chain 4, chloroplastic, found in Lolium perenne (Perennial ryegrass).